Consider the following 372-residue polypeptide: MAADKKAQKNTATKQIDPEQKEKALAAALAQIEKQFGKGSIMRLGDTQALDIEAVSTGSIGLDAALGIGGLPMGRIVEIYGPESSGKTTLTLSVIAQAQRIGKTCAFIDAEHALDPVYARKLGVDIDALLISQPDNGEQALEICDALVRSGAVDVIIVDSVAALTPKAEIEGDMGDSYMGLQARLMSQALRKLTANIKATNCLVVFINQIRMKIGVMFGNPETTTGGNALKFYASVRLDIRRSGVVKDGDEVVGSETKVKIVKNKVAPPFREVQFDIMYGEGIARMNELLILAEANGFIQKAGAWFSYNGTKIGQGKNNAIKWLKENPEVAEKIEQEIRNLLILTPDQPASEKLELDVNDESDFDEAFEEQE.

81–88 is an ATP binding site; sequence GPESSGKT.

It belongs to the RecA family.

It is found in the cytoplasm. Functionally, can catalyze the hydrolysis of ATP in the presence of single-stranded DNA, the ATP-dependent uptake of single-stranded DNA by duplex DNA, and the ATP-dependent hybridization of homologous single-stranded DNAs. It interacts with LexA causing its activation and leading to its autocatalytic cleavage. The protein is Protein RecA of Haemophilus ducreyi (strain 35000HP / ATCC 700724).